A 669-amino-acid polypeptide reads, in one-letter code: DNA mismatch repair protein MutL (669 aa).

The interval 361-409 is disordered; sequence ENVFSQPYQAPVTSSTQKKSTGAYQGSAGKGLTDTQKSPQKTLDTRQFG. Polar residues-rich tracts occupy residues 363 to 384 and 393 to 402; these read VFSQ…TGAY and TDTQKSPQKT.

It belongs to the DNA mismatch repair MutL/HexB family.

Functionally, this protein is involved in the repair of mismatches in DNA. It is required for dam-dependent methyl-directed DNA mismatch repair. May act as a 'molecular matchmaker', a protein that promotes the formation of a stable complex between two or more DNA-binding proteins in an ATP-dependent manner without itself being part of a final effector complex. This is DNA mismatch repair protein MutL from Proteus mirabilis (strain HI4320).